The sequence spans 66 residues: MAFLKKSLFLVLFLGLVSLSICEEEKRETEEEEHDQEEDDKSEEKRFLSLIPHIVSGVASIAKHLG.

An N-terminal signal peptide occupies residues 1–22 (MAFLKKSLFLVLFLGLVSLSIC). Positions 23-46 (EEEKRETEEEEHDQEEDDKSEEKR) are excised as a propeptide. The interval 25–44 (EKRETEEEEHDQEEDDKSEE) is disordered. A compositionally biased stretch (acidic residues) spans 30–41 (EEEEHDQEEDDK). L65 carries the post-translational modification Leucine amide.

This sequence belongs to the frog skin active peptide (FSAP) family. Phylloseptin subfamily. In terms of tissue distribution, expressed by the skin glands.

Its subcellular location is the secreted. The protein resides in the target cell membrane. Functionally, antimicrobial peptide with high activity against Gram-positive bacteria, low activity against Gram-negative bacteria, and moderate activity against fungi. Acts by causing bacterial membrane disruption inducing leakage of the intracellular content followed by cell death. It adopts an alpha-helical amphipathic structure in membrane environments. Also shows highly potent antiparasitic activity against Leishmania species. Shows moderate hemolytic activity on human erythrocytes. Is also active on human monocytes. This is Phylloseptin-S6 from Phyllomedusa sauvagei (Sauvage's leaf frog).